The sequence spans 196 residues: Imidazoleglycerol-phosphate dehydratase (196 aa).

This sequence belongs to the imidazoleglycerol-phosphate dehydratase family.

The protein resides in the cytoplasm. It carries out the reaction D-erythro-1-(imidazol-4-yl)glycerol 3-phosphate = 3-(imidazol-4-yl)-2-oxopropyl phosphate + H2O. The protein operates within amino-acid biosynthesis; L-histidine biosynthesis; L-histidine from 5-phospho-alpha-D-ribose 1-diphosphate: step 6/9. The sequence is that of Imidazoleglycerol-phosphate dehydratase from Moorella thermoacetica (strain ATCC 39073 / JCM 9320).